The primary structure comprises 446 residues: Minor teichoic acid biosynthesis protein GgaA (446 aa).

Belongs to the glycosyltransferase 2 family.

The protein operates within cell wall biogenesis; poly(glucopyranosyl N-acetylgalactosamine 1-phosphate) teichoic acid biosynthesis. Involved in the biosynthesis of galactosamine-containing minor teichoic acid, a non-essential cell wall polymer in B.subtilis 168. In Bacillus subtilis (strain 168), this protein is Minor teichoic acid biosynthesis protein GgaA (ggaA).